A 256-amino-acid polypeptide reads, in one-letter code: Trypsinogen-like protein 3 (256 aa).

The signal sequence occupies residues 1–14 (MILLLVLALGLAGA). The Peptidase S1 domain occupies 15 to 237 (SPLGEYKECP…YNDWIHQVMA (223 aa)). 6 disulfides stabilise this stretch: Cys-23–Cys-153, Cys-41–Cys-57, Cys-125–Cys-226, Cys-132–Cys-199, Cys-164–Cys-180, and Cys-189–Cys-213.

It belongs to the peptidase S1 family.

The protein is Trypsinogen-like protein 3 (trp3) of Pseudopleuronectes americanus (Winter flounder).